A 597-amino-acid chain; its full sequence is Probable E3 ubiquitin-protein ligase ARI1 (597 aa).

Residues 119–333 are TRIAD supradomain; that stretch reads SQMSCDVCME…IAGHSCGRYQ (215 aa). Residues Cys123, Cys126, Cys140, His142, Cys145, Cys148, Cys167, Cys172, Cys214, Cys220, Cys236, Cys238, Cys243, Cys246, His251, Cys256, Cys283, and Cys286 each coordinate Zn(2+). The RING-type 1 zinc finger occupies 123–172; it reads CDVCMEDLPGDHMTRMDCGHCFCNNCWTEHFTVQINEGQSKRIRCMAHQC. Residues 194-256 form an IBR-type zinc finger; that stretch reads AKFDRYLLES…LCQAHSPCSC (63 aa). The RING-type 2; atypical zinc finger occupies 283-311; sequence CPKCYKPVEKNGGCNLVRCICGQCFCWLC. Cys296 is a catalytic residue. Residues Cys301, Cys303, Cys308, Cys311, His319, and Cys329 each coordinate Zn(2+). The tract at residues 536–575 is disordered; it reads FQPLDSGTSGVTSRPEQASGSRSSEDTICSSSQKRPKKEG. Polar residues predominate over residues 540–568; the sequence is DSGTSGVTSRPEQASGSRSSEDTICSSSQ.

It belongs to the RBR family. Ariadne subfamily. Zn(2+) serves as cofactor. Ubiquitous.

It carries out the reaction [E2 ubiquitin-conjugating enzyme]-S-ubiquitinyl-L-cysteine + [acceptor protein]-L-lysine = [E2 ubiquitin-conjugating enzyme]-L-cysteine + [acceptor protein]-N(6)-ubiquitinyl-L-lysine.. Its pathway is protein modification; protein ubiquitination. Functionally, might act as an E3 ubiquitin-protein ligase, or as part of E3 complex, which accepts ubiquitin from specific E2 ubiquitin-conjugating enzymes and then transfers it to substrates. This is Probable E3 ubiquitin-protein ligase ARI1 (ARI1) from Arabidopsis thaliana (Mouse-ear cress).